The chain runs to 306 residues: OVARIAN TUMOR DOMAIN-containing deubiquitinating enzyme 1 (306 aa).

The OTU domain maps to 81-295 (IGIRRTRGDG…PGHYDILYPK (215 aa)). D89 is an active-site residue. C92 acts as the Nucleophile in catalysis. Residues H259 and H288 contribute to the active site.

The protein belongs to the peptidase C65 family.

The catalysed reaction is Thiol-dependent hydrolysis of ester, thioester, amide, peptide and isopeptide bonds formed by the C-terminal Gly of ubiquitin (a 76-residue protein attached to proteins as an intracellular targeting signal).. Its activity is regulated as follows. Cleavage activities for 'Lys-48'- and 'Lys-63'-linked ubiquitin (UB) tetramers is inhibited by UB aldehyde and N-ethylmaleimide but not by the metalloprotease inhibitors 1,10-phenanthroline and EDTA, and the serine protease inhibitor phenylmethylsulfonyl fluoride. Functionally, hydrolase that can remove conjugated ubiquitin from proteins in vitro and may therefore play an important regulatory role at the level of protein turnover by preventing degradation. Cysteine protease with a preference for Met-1 and 'Lys-48' over 'Lys-63'-linked ubiquitin (UB) tetramers (e.g. Ub2, Ub3 and Ub4) as substrates. This is OVARIAN TUMOR DOMAIN-containing deubiquitinating enzyme 1 from Arabidopsis thaliana (Mouse-ear cress).